The chain runs to 56 residues: Ovomucoid (56 aa).

The 51-residue stretch at 6–56 folds into the Kazal-like domain; sequence VDCSEYPKPACTLEYVPICGSDNKTYGNKCNFCNAVVESNGTLTLSHFGKC. 3 disulfides stabilise this stretch: Cys8–Cys38, Cys16–Cys35, and Cys24–Cys56. An N-linked (GlcNAc...) asparagine glycan is attached at Asn45.

It is found in the secreted. The chain is Ovomucoid from Cyrtonyx montezumae (Montezuma quail).